The chain runs to 343 residues: Homeobox protein DBX1 (343 aa).

2 disordered regions span residues 56 to 100 (RSVP…TAFS) and 240 to 343 (KERE…ITVS). A DNA-binding region (homeobox) is located at residues 181–240 (GMLRRAVFSDVQRKALEKMFQKQKYISKPDRKKLAAKLGLKDSQVKIWFQNRRMKWRNSK). Residues 314-323 (AHSSSPGKPS) are compositionally biased toward low complexity. A compositionally biased stretch (acidic residues) spans 326–343 (SDSEEEEEGEEQEEITVS).

The protein belongs to the H2.0 homeobox family.

It localises to the nucleus. In terms of biological role, could have a role in patterning the central nervous system during embryogenesis. Has a key role in regulating the distinct phenotypic features that distinguish two major classes of ventral interneurons, V0 and V1 neurons. Regulates the transcription factor profile, neurotransmitter phenotype, intraspinal migratory path and axonal trajectory of V0 neurons, features that differentiate them from an adjacent set of V1 neurons. In Homo sapiens (Human), this protein is Homeobox protein DBX1 (DBX1).